Reading from the N-terminus, the 431-residue chain is Na(+)-translocating NADH-quinone reductase subunit F (431 aa).

The chain crosses the membrane as a helical span at residues 10-30; that stretch reads IFVASAAFCSLGLILVAVILL. One can recognise a 2Fe-2S ferredoxin-type domain in the interval 41–133; it reads CKLKINNDDS…DLCLEVEERY (93 aa). Residues C76, C82, C85, and C117 each contribute to the [2Fe-2S] cluster site. Positions 136 to 286 constitute an FAD-binding FR-type domain; the sequence is ASSWEGTVVS…SGPYGESFMK (151 aa).

It belongs to the NqrF family. Composed of six subunits; NqrA, NqrB, NqrC, NqrD, NqrE and NqrF. The cofactor is [2Fe-2S] cluster. FAD serves as cofactor.

The protein localises to the cell inner membrane. The enzyme catalyses a ubiquinone + n Na(+)(in) + NADH + H(+) = a ubiquinol + n Na(+)(out) + NAD(+). Its function is as follows. NQR complex catalyzes the reduction of ubiquinone-1 to ubiquinol by two successive reactions, coupled with the transport of Na(+) ions from the cytoplasm to the periplasm. The first step is catalyzed by NqrF, which accepts electrons from NADH and reduces ubiquinone-1 to ubisemiquinone by a one-electron transfer pathway. The chain is Na(+)-translocating NADH-quinone reductase subunit F from Chlamydia trachomatis serovar A (strain ATCC VR-571B / DSM 19440 / HAR-13).